Here is a 544-residue protein sequence, read N- to C-terminus: Prolyl 4-hydroxylase subunit alpha-3 (544 aa).

The first 19 residues, 1 to 19, serve as a signal peptide directing secretion; sequence MGPAARLAALLAVLAFRAG. A coiled-coil region spans residues 107–131; it reads LEASENIRALKDGYERVEQDLPAFE. The stretch at 227–260 is one TPR repeat; it reads EDALDHLAFAYFQAGNVLCALNLSREFLLYSPDN. A glycan (N-linked (GlcNAc...) asparagine) is linked at N248. The Fe2OG dioxygenase domain occupies 422-529; sequence YAEYLQVVNY…KWVANKWIHE (108 aa). 2 residues coordinate Fe cation: H440 and D442. A glycan (N-linked (GlcNAc...) asparagine) is linked at N482. H510 serves as a coordination point for Fe cation. K520 contacts 2-oxoglutarate.

The protein belongs to the P4HA family. Heterotetramer of two alpha-3 chains and two beta chains (the beta chain is the multi-functional PDI). The cofactor is Fe(2+). It depends on L-ascorbate as a cofactor. Post-translationally, N-glycosylation plays no role in the catalytic activity.

It is found in the endoplasmic reticulum lumen. It catalyses the reaction L-prolyl-[collagen] + 2-oxoglutarate + O2 = trans-4-hydroxy-L-prolyl-[collagen] + succinate + CO2. Its function is as follows. Catalyzes the post-translational formation of 4-hydroxyproline in -Xaa-Pro-Gly- sequences in collagens and other proteins. This is Prolyl 4-hydroxylase subunit alpha-3 (P4HA3) from Bos taurus (Bovine).